A 202-amino-acid polypeptide reads, in one-letter code: uncharacterized protein (202 aa).

Residues Thr10–Val30 traverse the membrane as a helical segment.

This sequence belongs to the bacterial sugar transferase family.

It is found in the cell membrane. May be involved in the production of the exopolysaccharide (EPS) component of the extracellular matrix during biofilm formation. EPS is responsible for the adhesion of chains of cells into bundles. This is an uncharacterized protein from Bacillus subtilis (strain 168).